Reading from the N-terminus, the 303-residue chain is N-acetyl-D-glucosamine kinase (303 aa).

Residues 4 to 11 (GFDVGGTK) and 133 to 140 (GFGGGLVF) each bind ATP. Positions 157, 177, 179, and 184 each coordinate Zn(2+).

This sequence belongs to the ROK (NagC/XylR) family. NagK subfamily.

The enzyme catalyses N-acetyl-D-glucosamine + ATP = N-acetyl-D-glucosamine 6-phosphate + ADP + H(+). It functions in the pathway cell wall biogenesis; peptidoglycan recycling. Its function is as follows. Catalyzes the phosphorylation of N-acetyl-D-glucosamine (GlcNAc) derived from cell-wall degradation, yielding GlcNAc-6-P. This is N-acetyl-D-glucosamine kinase from Photobacterium profundum (strain SS9).